The following is a 216-amino-acid chain: tRNA (guanine-N(7)-)-methyltransferase (216 aa).

Residues Glu-44, Glu-69, Asn-96, and Asp-118 each coordinate S-adenosyl-L-methionine. Asp-118 is an active-site residue. A substrate-binding site is contributed by Lys-122. Residues 124–129 (RHEKRR) form an interaction with RNA region. Substrate is bound by residues Asp-154 and 191–194 (TEYE).

It belongs to the class I-like SAM-binding methyltransferase superfamily. TrmB family.

The catalysed reaction is guanosine(46) in tRNA + S-adenosyl-L-methionine = N(7)-methylguanosine(46) in tRNA + S-adenosyl-L-homocysteine. It participates in tRNA modification; N(7)-methylguanine-tRNA biosynthesis. Functionally, catalyzes the formation of N(7)-methylguanine at position 46 (m7G46) in tRNA. The polypeptide is tRNA (guanine-N(7)-)-methyltransferase (Geobacillus thermodenitrificans (strain NG80-2)).